Here is a 101-residue protein sequence, read N- to C-terminus: Small ribosomal subunit protein bS6 (101 aa).

Belongs to the bacterial ribosomal protein bS6 family.

In terms of biological role, binds together with bS18 to 16S ribosomal RNA. This Nitratidesulfovibrio vulgaris (strain DSM 19637 / Miyazaki F) (Desulfovibrio vulgaris) protein is Small ribosomal subunit protein bS6.